We begin with the raw amino-acid sequence, 300 residues long: 33 kDa chaperonin (300 aa).

2 cysteine pairs are disulfide-bonded: Cys-247–Cys-249 and Cys-280–Cys-283.

It belongs to the HSP33 family. Post-translationally, under oxidizing conditions two disulfide bonds are formed involving the reactive cysteines. Under reducing conditions zinc is bound to the reactive cysteines and the protein is inactive.

Its subcellular location is the cytoplasm. Its function is as follows. Redox regulated molecular chaperone. Protects both thermally unfolding and oxidatively damaged proteins from irreversible aggregation. Plays an important role in the bacterial defense system toward oxidative stress. This is 33 kDa chaperonin from Prochlorococcus marinus (strain MIT 9515).